Here is a 356-residue protein sequence, read N- to C-terminus: S-adenosylmethionine:tRNA ribosyltransferase-isomerase (356 aa).

It belongs to the QueA family. In terms of assembly, monomer.

It localises to the cytoplasm. The enzyme catalyses 7-aminomethyl-7-carbaguanosine(34) in tRNA + S-adenosyl-L-methionine = epoxyqueuosine(34) in tRNA + adenine + L-methionine + 2 H(+). The protein operates within tRNA modification; tRNA-queuosine biosynthesis. Transfers and isomerizes the ribose moiety from AdoMet to the 7-aminomethyl group of 7-deazaguanine (preQ1-tRNA) to give epoxyqueuosine (oQ-tRNA). This is S-adenosylmethionine:tRNA ribosyltransferase-isomerase from Escherichia coli O81 (strain ED1a).